We begin with the raw amino-acid sequence, 29 residues long: Cyclotide mela-2 (29 aa).

Residues 1-29 (GKPTCGETCFKGKCYTPGCTCSYPLCKKD) constitute a cross-link (cyclopeptide (Gly-Asp)). 3 disulfides stabilise this stretch: cysteine 5/cysteine 19, cysteine 9/cysteine 21, and cysteine 14/cysteine 26.

In terms of processing, this is a cyclic peptide. Post-translationally, contains 3 disulfide bonds.

In terms of biological role, probably participates in a plant defense mechanism (Potential). Binds to and induces leakage in phospholipd membranes, particularly ones containing 1-palmitoyl-2-oleophosphatidylethanolamine (POPE). In vitro, displays cytotoxicity against cultured cells but no hemolytic activity towards fresh erythrocytes. Not active against Gram-negative bacterium E.coli ATCC 25922 or Gram-positive bacterium S.aureus ATCC 25923 up to a concentration of 64 uM. The chain is Cyclotide mela-2 from Melicytus latifolius (Norfolk Island mahoe).